A 163-amino-acid polypeptide reads, in one-letter code: Large ribosomal subunit protein bL17 (163 aa).

A compositionally biased stretch (low complexity) spans 123 to 135 (AEASRATRASASK). The interval 123–163 (AEASRATRASASKKAAEEAETEEVVEAPAEETATEEAAEEK) is disordered. The span at 140 to 163 (EAETEEVVEAPAEETATEEAAEEK) shows a compositional bias: acidic residues.

Belongs to the bacterial ribosomal protein bL17 family. As to quaternary structure, part of the 50S ribosomal subunit. Contacts protein L32.

The polypeptide is Large ribosomal subunit protein bL17 (Corynebacterium glutamicum (strain ATCC 13032 / DSM 20300 / JCM 1318 / BCRC 11384 / CCUG 27702 / LMG 3730 / NBRC 12168 / NCIMB 10025 / NRRL B-2784 / 534)).